The sequence spans 273 residues: MPELPEVEVTRRGVAPHLEGQVITGVALRHTGLRWPFPATLSQTLAGRTVRSTGRRGKYLLIHFDHGTLIIHLGMSGHLRILPSDVPPKKHDHFDLEIGPQLLRLTDPRRFGAVLWHAAEDGSIENHLLLRTLGVEPLEAAFSAQWLYQQTRNRSSAIKQVLLAGDIVVGVGNIYASESLFQARINPKTPAHRIGLARYERLAEAIRQILAAAIEQGGSTLKDFIGVNGQSGYFQQNYFCYARTGEPCRICKTPIRQIVQGQRSTFYCPNCQK.

The active-site Schiff-base intermediate with DNA is proline 2. The active-site Proton donor is the glutamate 3. Lysine 58 serves as the catalytic Proton donor; for beta-elimination activity. DNA-binding residues include histidine 91, arginine 109, and arginine 154. The FPG-type zinc-finger motif lies at 239–273; the sequence is FCYARTGEPCRICKTPIRQIVQGQRSTFYCPNCQK. Catalysis depends on arginine 263, which acts as the Proton donor; for delta-elimination activity.

It belongs to the FPG family. In terms of assembly, monomer. Zn(2+) serves as cofactor.

It carries out the reaction Hydrolysis of DNA containing ring-opened 7-methylguanine residues, releasing 2,6-diamino-4-hydroxy-5-(N-methyl)formamidopyrimidine.. The catalysed reaction is 2'-deoxyribonucleotide-(2'-deoxyribose 5'-phosphate)-2'-deoxyribonucleotide-DNA = a 3'-end 2'-deoxyribonucleotide-(2,3-dehydro-2,3-deoxyribose 5'-phosphate)-DNA + a 5'-end 5'-phospho-2'-deoxyribonucleoside-DNA + H(+). Its function is as follows. Involved in base excision repair of DNA damaged by oxidation or by mutagenic agents. Acts as a DNA glycosylase that recognizes and removes damaged bases. Has a preference for oxidized purines, such as 7,8-dihydro-8-oxoguanine (8-oxoG). Has AP (apurinic/apyrimidinic) lyase activity and introduces nicks in the DNA strand. Cleaves the DNA backbone by beta-delta elimination to generate a single-strand break at the site of the removed base with both 3'- and 5'-phosphates. The polypeptide is Formamidopyrimidine-DNA glycosylase (Janthinobacterium sp. (strain Marseille) (Minibacterium massiliensis)).